The chain runs to 195 residues: Cysteine/O-acetylserine efflux protein (195 aa).

Topologically, residues 1–9 (MTPMLLSAF) are periplasmic. The chain crosses the membrane as a helical span at residues 10–32 (WTYTLITALTPGPNNILALSAAT). At 33–46 (AHGFRQSIRVLAGM) the chain is on the cytoplasmic side. Residues 47–67 (SLGFLVVMLLCAGIAFSLAVI) form a helical membrane-spanning segment. Topologically, residues 68 to 69 (DP) are periplasmic. Residues 70–90 (AIIHLLSWVGAAYILWLAWKI) traverse the membrane as a helical segment. Topologically, residues 91–104 (ATSPAADEKVRPKP) are cytoplasmic. Residues 105 to 125 (VGFWVSFGLQFVNVKIILYGI) traverse the membrane as a helical segment. Over 126–141 (TALSTFVLPQTQALNW) the chain is Periplasmic. Residues 142-162 (VIGVSILLALIGTFGNVCWAL) traverse the membrane as a helical segment. Residues 163 to 176 (AGHLFQRAFRHYGR) lie on the Cytoplasmic side of the membrane. A helical membrane pass occupies residues 177 to 194 (QLNIILALLLVYCAVRIF). Tyr195 is a topological domain (periplasmic).

It belongs to the Rht family.

The protein resides in the cell inner membrane. It carries out the reaction O-acetyl-L-serine(in) = O-acetyl-L-serine(out). The catalysed reaction is L-cysteine(in) = L-cysteine(out). Functionally, exporter of O-acetylserine (OAS) and cysteine. In Salmonella paratyphi A (strain ATCC 9150 / SARB42), this protein is Cysteine/O-acetylserine efflux protein (eamB).